A 189-amino-acid chain; its full sequence is Interferon alpha-6 (189 aa).

The N-terminal stretch at 1–23 (MARLCAFLMVLAVLSYWPTCSLG) is a signal peptide. Cystine bridges form between C24–C122 and C52–C162. An N-linked (GlcNAc...) asparagine glycan is attached at N101.

Belongs to the alpha/beta interferon family.

The protein resides in the secreted. In terms of biological role, produced by macrophages, IFN-alpha have antiviral activities. Interferon stimulates the production of two enzymes: a protein kinase and an oligoadenylate synthetase. In Mus musculus (Mouse), this protein is Interferon alpha-6 (Ifna6).